The sequence spans 942 residues: UvrABC system protein A (942 aa).

32–39 contributes to the ATP binding site; sequence GLSGSGKS. The C4-type zinc-finger motif lies at 251–278; sequence CPVCGFTVPELEPRLFSFNAPFGSCPTC. ABC transporter domains follow at residues 308-589 and 609-937; these read WNPI…KKSI and GNGR…HYLK. 641–648 contributes to the ATP binding site; sequence GVSGSGKS. A C4-type zinc finger spans residues 740 to 766; sequence CEACSGDGIIKIEMHFLPDVYVPCEVC.

Belongs to the ABC transporter superfamily. UvrA family. In terms of assembly, forms a heterotetramer with UvrB during the search for lesions.

The protein resides in the cytoplasm. The UvrABC repair system catalyzes the recognition and processing of DNA lesions. UvrA is an ATPase and a DNA-binding protein. A damage recognition complex composed of 2 UvrA and 2 UvrB subunits scans DNA for abnormalities. When the presence of a lesion has been verified by UvrB, the UvrA molecules dissociate. The protein is UvrABC system protein A of Streptococcus pyogenes serotype M18 (strain MGAS8232).